The chain runs to 384 residues: 5-cytosine rRNA methyltransferase NSUN4 (384 aa).

The transit peptide at 1–25 (MAALTLRGVRELLKRVDLATVPRRH) directs the protein to the mitochondrion. S-adenosyl-L-methionine is bound by residues glycine 185, glycine 186, lysine 187, and aspartate 204. The residue at position 206 (serine 206) is a Phosphoserine. Residues arginine 209, aspartate 237, glycine 238, and aspartate 255 each coordinate S-adenosyl-L-methionine. Cysteine 310 functions as the Nucleophile in the catalytic mechanism.

This sequence belongs to the class I-like SAM-binding methyltransferase superfamily. RsmB/NOP family. In terms of assembly, heterodimer with MTERFD2/MTERF4; this interaction seems to be required for NSUN4 recruitment to the mitochondrial large ribosomal subunit.

It is found in the mitochondrion. It carries out the reaction a cytidine in rRNA + S-adenosyl-L-methionine = a 5-methylcytidine in rRNA + S-adenosyl-L-homocysteine + H(+). The catalysed reaction is a cytidine in mRNA + S-adenosyl-L-methionine = a 5-methylcytidine in mRNA + S-adenosyl-L-homocysteine + H(+). Its function is as follows. Mitochondrial RNA cytosine C(5)-methyltransferase that methylates cytosine to 5-methylcytosine (m5C) in various RNAs, such as rRNAs, mRNAs and some long non-coding RNAs (lncRNAs). Involved in mitochondrial ribosome small subunit (SSU) maturation by catalyzing methylation of mitochondrial 12S rRNA; the function is independent of MTERFD2/MTERF4 and assembled mitochondrial ribosome large subunit (LSU). Targeted to LSU by MTERFD2/MTERF4 and probably is involved in a final step in ribosome biogenesis to ensure that SSU and LSU are assembled. In vitro can methylate 16S rRNA of the LSU; the methylation is enhanced by MTERFD/MTERF4. Also acts as a regulator of innate immunity by marking double-stranded mitochondrial RNAs(mt-dsRNAs) generated in response to stress: catalyzes m5C modification on mitochondrial RNAs, such as a mRNAs and lncRNAs, with a preference for the termini of light-strand lncRNAs, promoting their degradation and cytosolic release. Modified light-strand lncRNAs are then recognized by C1QBP reader and recruited to the mitochondrial degradosome complex, which promotes their degradation. This chain is 5-cytosine rRNA methyltransferase NSUN4, found in Homo sapiens (Human).